We begin with the raw amino-acid sequence, 370 residues long: Glutamate 5-kinase (370 aa).

ATP is bound at residue Lys12. Substrate is bound by residues Ser52, Asp139, and Asn151. ATP contacts are provided by residues 171–172 and 213–219; these read SD and TGGMFTK. The PUA domain maps to 278–356; sequence QAHIAVDAGA…SDIESILGYS (79 aa).

Belongs to the glutamate 5-kinase family.

The protein localises to the cytoplasm. The catalysed reaction is L-glutamate + ATP = L-glutamyl 5-phosphate + ADP. It participates in amino-acid biosynthesis; L-proline biosynthesis; L-glutamate 5-semialdehyde from L-glutamate: step 1/2. In terms of biological role, catalyzes the transfer of a phosphate group to glutamate to form L-glutamate 5-phosphate. The polypeptide is Glutamate 5-kinase (Herpetosiphon aurantiacus (strain ATCC 23779 / DSM 785 / 114-95)).